A 353-amino-acid chain; its full sequence is UPF0283 membrane protein YcjF (353 aa).

3 consecutive transmembrane segments (helical) span residues 70–90, 100–120, and 213–233; these read MVMGGLALFGASVVGQGIQWT, VALGGCAAGALIIGAGVGSVV, and ESTLMIAVSPLALVDMAFIAW.

It belongs to the UPF0283 family.

Its subcellular location is the cell inner membrane. This chain is UPF0283 membrane protein YcjF, found in Shigella flexneri serotype 5b (strain 8401).